The sequence spans 432 residues: Proteinase-activated receptor 1 (432 aa).

The N-terminal stretch at 1–21 (MGPRRLLLVAVGLSLCGPLLS) is a signal peptide. Residues 22–45 (SRVPMRQPESERMYATPYATPNPR) constitute a propeptide, removed for receptor activation. Residues 46 to 109 (SFFLRNPSED…SGYLTSPWLT (64 aa)) are Extracellular-facing. N69 and N82 each carry an N-linked (GlcNAc...) asparagine glycan. Residues 110–135 (LFIPSVYTFVFIVSLPLNILAIAVFV) traverse the membrane as a helical segment. Over 136-144 (FRMKVKKPA) the chain is Cytoplasmic. Residues 145–164 (VVYMLHLAMADVLFVSVLPF) traverse the membrane as a helical segment. At 165 to 183 (KISYYFSGTDWQFGSGMCR) the chain is on the extracellular side. C182 and C261 are oxidised to a cystine. The chain crosses the membrane as a helical span at residues 184 to 205 (FATAACYCNMYASIMLMTVISI). Over 206 to 225 (DRFLAVVYPIQSLSWRTLGR) the chain is Cytoplasmic. The helical transmembrane segment at 226 to 246 (ANFTCVVIWVMAIMGVVPLLL) threads the bilayer. The Extracellular segment spans residues 247–275 (KEQTTQVPGLNITTCHDVLNETLLHGFYS). N-linked (GlcNAc...) asparagine glycosylation is found at N257 and N266. A helical membrane pass occupies residues 276–295 (YYFSAFSAIFFLVPLIISTV). Residues 296-318 (CYTSIIRCLSSSAVANRSKKSRA) lie on the Cytoplasmic side of the membrane. The chain crosses the membrane as a helical span at residues 319-341 (LFLSAAVFCIFIVCFGPTNVLLI). Over 342-357 (VHYLLLSDSPGTETAY) the chain is Extracellular. Residues 358 to 381 (FAYLLCVCVTSVASCIDPLIYYYA) traverse the membrane as a helical segment. Residues 382-432 (SSECQKHLYSILCCRESSDSNSCNSTGQLMPSKMDTCSSHLNNSIYKKLLA) lie on the Cytoplasmic side of the membrane. S425 carries the post-translational modification Phosphoserine.

Belongs to the G-protein coupled receptor 1 family. In terms of processing, proteolytic cleavage by thrombin generates a new N-terminus that functions as a tethered ligand. Also proteolytically cleaved by cathepsin CTSG. Post-translationally, phosphorylated in the C-terminal tail; probably mediating desensitization prior to the uncoupling and internalization of the receptor. As to expression, expressed in primary cultured oligodendrocytes.

The protein localises to the cell membrane. Its function is as follows. High affinity receptor that binds the activated thrombin, leading to calcium release from intracellular stores. The thrombin-activated receptor signaling pathway is mediated through PTX-insensitive G proteins, activation of phospholipase C resulting in the production of 1D-myo-inositol 1,4,5-trisphosphate (InsP3) which binds to InsP3 receptors causing calcium release from the stores. In astrocytes, the calcium released into the cytosol allows the Ca(2+)-dependent release of L-glutamate into the synaptic cleft through BEST1, that targets the neuronal postsynaptic GRIN2A/NMDAR receptor resulting in the synaptic plasticity regulation. May play a role in platelets activation and in vascular development. Mediates up-regulation of pro-inflammatory cytokines, such as MCP-1/CCL2 and IL6, triggered by coagulation factor Xa (F10) in cardiac fibroblasts and umbilical vein endothelial cells. This Rattus norvegicus (Rat) protein is Proteinase-activated receptor 1.